The primary structure comprises 121 residues: Ribosome-binding factor A (121 aa).

The protein belongs to the RbfA family. In terms of assembly, monomer. Binds 30S ribosomal subunits, but not 50S ribosomal subunits or 70S ribosomes.

Its subcellular location is the cytoplasm. In terms of biological role, one of several proteins that assist in the late maturation steps of the functional core of the 30S ribosomal subunit. Associates with free 30S ribosomal subunits (but not with 30S subunits that are part of 70S ribosomes or polysomes). Required for efficient processing of 16S rRNA. May interact with the 5'-terminal helix region of 16S rRNA. The protein is Ribosome-binding factor A of Clostridium novyi (strain NT).